Reading from the N-terminus, the 95-residue chain is MEMNLQFFSHHKGGGSTSNGRDSAGRRLGTKRADGQAAKAGMIIYRQRGTHIYPGVNVGRGNDDTLFALADGVVRFERKGRDKRQVSVYPVADAE.

A propeptide spanning residues 1-8 (MEMNLQFF) is cleaved from the precursor. The interval 1 to 34 (MEMNLQFFSHHKGGGSTSNGRDSAGRRLGTKRAD) is disordered.

This sequence belongs to the bacterial ribosomal protein bL27 family. Post-translationally, the N-terminus is cleaved by ribosomal processing cysteine protease Prp.

In Pediococcus pentosaceus (strain ATCC 25745 / CCUG 21536 / LMG 10740 / 183-1w), this protein is Large ribosomal subunit protein bL27.